Consider the following 301-residue polypeptide: Small ribosomal subunit protein uS2 (301 aa).

The protein belongs to the universal ribosomal protein uS2 family. In terms of assembly, component of the small ribosomal subunit. Mature ribosomes consist of a small (40S) and a large (60S) subunit. The 40S subunit contains about 33 different proteins and 1 molecule of RNA (18S). The 60S subunit contains about 49 different proteins and 3 molecules of RNA (28S, 5.8S and 5S). Interacts with ribosomal protein S21.

It is found in the cytoplasm. Required for the assembly and/or stability of the 40S ribosomal subunit. Required for the processing of the 20S rRNA-precursor to mature 18S rRNA in a late step of the maturation of 40S ribosomal subunits. The sequence is that of Small ribosomal subunit protein uS2 from Brugia malayi (Filarial nematode worm).